Consider the following 335-residue polypeptide: Trans-1,2-dihydrobenzene-1,2-diol dehydrogenase (335 aa).

Belongs to the Gfo/Idh/MocA family. In terms of assembly, homodimer.

It catalyses the reaction (1R,2R)-1,2-dihydrobenzene-1,2-diol + NADP(+) = catechol + NADPH + H(+). The catalysed reaction is D-xylose + NADP(+) = D-xylono-1,5-lactone + NADPH + H(+). The protein is Trans-1,2-dihydrobenzene-1,2-diol dehydrogenase (DHDH) of Bos taurus (Bovine).